The sequence spans 295 residues: Tyrosine recombinase XerD (295 aa).

A Core-binding (CB) domain is found at 1–85; it reads METIIEEYLR…TIRSFHQFAI (85 aa). One can recognise a Tyr recombinase domain in the interval 106–289; sequence KLPDVLNVDE…SKSQIRKMYN (184 aa). Catalysis depends on residues R146, K170, H241, R244, and H267. Residue Y276 is the O-(3'-phospho-DNA)-tyrosine intermediate of the active site.

The protein belongs to the 'phage' integrase family. XerD subfamily. Forms a cyclic heterotetrameric complex composed of two molecules of XerC and two molecules of XerD.

Its subcellular location is the cytoplasm. In terms of biological role, site-specific tyrosine recombinase, which acts by catalyzing the cutting and rejoining of the recombining DNA molecules. The XerC-XerD complex is essential to convert dimers of the bacterial chromosome into monomers to permit their segregation at cell division. It also contributes to the segregational stability of plasmids. This is Tyrosine recombinase XerD from Staphylococcus aureus (strain COL).